A 185-amino-acid polypeptide reads, in one-letter code: Ribosome-recycling factor (185 aa).

Belongs to the RRF family.

It is found in the cytoplasm. In terms of biological role, responsible for the release of ribosomes from messenger RNA at the termination of protein biosynthesis. May increase the efficiency of translation by recycling ribosomes from one round of translation to another. The protein is Ribosome-recycling factor of Salinispora arenicola (strain CNS-205).